The chain runs to 357 residues: Phosphoribosylformylglycinamidine cyclo-ligase (357 aa).

Belongs to the AIR synthase family.

It localises to the cytoplasm. The enzyme catalyses 2-formamido-N(1)-(5-O-phospho-beta-D-ribosyl)acetamidine + ATP = 5-amino-1-(5-phospho-beta-D-ribosyl)imidazole + ADP + phosphate + H(+). The protein operates within purine metabolism; IMP biosynthesis via de novo pathway; 5-amino-1-(5-phospho-D-ribosyl)imidazole from N(2)-formyl-N(1)-(5-phospho-D-ribosyl)glycinamide: step 2/2. The sequence is that of Phosphoribosylformylglycinamidine cyclo-ligase from Nitrobacter winogradskyi (strain ATCC 25391 / DSM 10237 / CIP 104748 / NCIMB 11846 / Nb-255).